The primary structure comprises 374 residues: Glutamate 5-kinase (374 aa).

Lys-16 contributes to the ATP binding site. Substrate contacts are provided by Ser-56, Asp-143, and Asn-155. 175–176 contributes to the ATP binding site; it reads TD. The region spanning 282 to 360 is the PUA domain; the sequence is KGCFVVDEGA…TRIEEILGYV (79 aa).

It belongs to the glutamate 5-kinase family.

It localises to the cytoplasm. It carries out the reaction L-glutamate + ATP = L-glutamyl 5-phosphate + ADP. The protein operates within amino-acid biosynthesis; L-proline biosynthesis; L-glutamate 5-semialdehyde from L-glutamate: step 1/2. Its function is as follows. Catalyzes the transfer of a phosphate group to glutamate to form L-glutamate 5-phosphate. The protein is Glutamate 5-kinase of Methylococcus capsulatus (strain ATCC 33009 / NCIMB 11132 / Bath).